We begin with the raw amino-acid sequence, 405 residues long: MAKGTFERTKPHVNVGTIGHVDHGKTTLTAAITFTAAASDPTIEKLAYDQIDKAPEEKARGITINTAHVEYNTPTRHYSHVDCPGHADYVKNMITGAAQMDGAILVVSSADGPMPQTREHILLARQVGVPYIVVFMNKVDMVDDEELLELVEMEVRELLSKYEFPGDDLPVIKGSALQALEALQANPKTARGEDKWVDRIWELLDAVDSYIPTPERATDKTFLMPVEDVFTITGRGTVATGRVERGVVKVQDEVEIIGLRDTKKTTVTGIEMHRKLLDSGMAGDNVGVLLRGVARDDVERGQVLAKPGSIKPHTKFEASVYVLSKDEGGRHSAFFGGYRPQFYFRTTDVTGVVELPEGVEMVMPGDNITFVVELIKPIAMEEGLRFAIREGGRTVGAGVVAKVLE.

Residues lysine 10–glutamate 215 enclose the tr-type G domain. Residues glycine 19 to threonine 26 are G1. A GTP-binding site is contributed by glycine 19–threonine 26. Threonine 26 contributes to the Mg(2+) binding site. Positions glycine 61–asparagine 65 are G2. The tract at residues aspartate 82–glycine 85 is G3. GTP contacts are provided by residues aspartate 82–histidine 86 and asparagine 137–aspartate 140. Positions asparagine 137 to aspartate 140 are G4. Residues serine 175–leucine 177 are G5.

This sequence belongs to the TRAFAC class translation factor GTPase superfamily. Classic translation factor GTPase family. EF-Tu/EF-1A subfamily. Monomer.

The protein localises to the cytoplasm. It catalyses the reaction GTP + H2O = GDP + phosphate + H(+). Functionally, GTP hydrolase that promotes the GTP-dependent binding of aminoacyl-tRNA to the A-site of ribosomes during protein biosynthesis. This Deinonema sp protein is Elongation factor Tu.